A 202-amino-acid chain; its full sequence is UPF0301 protein BCG_0069 (202 aa).

This sequence belongs to the UPF0301 (AlgH) family.

This is UPF0301 protein BCG_0069 from Mycobacterium bovis (strain BCG / Pasteur 1173P2).